Reading from the N-terminus, the 348-residue chain is MTAQSQVLKIRRPDDWHIHLRDDDMLKTVVPYTSEFYGRAIVMPNLVPPVTTVAAAIAYRQRIMDAVPAGHDFTPLMTCYLTDSLDPAELERGFNEGVFTAAKLYPANATTNSSHGVTSTDAIMPVLERMEKLGMPLLVHGEVTHAEIDIFDREARFIETVMEPLRQRLPGLKVVFEHITTKDAAEYVRDGNELLAATITPQHLMFNRNHMLVGGIRPHLYCLPVLKRNIHQQALRELVASGFSRAFLGTDSAPHARHRKEASCGCAGCFNAPTALGSYATVFEEMNALQHFEAFCSLNGPRFYGLPVNESYVELVREETTVVDSIALPNDTLVPFLAGETVRWTVKK.

Zn(2+) is bound by residues H17 and H19. Residues 19–21 and N45 contribute to the substrate site; that span reads HLR. Zn(2+) contacts are provided by K103, H140, and H178. N6-carboxylysine is present on K103. H140 contributes to the substrate binding site. L223 serves as a coordination point for substrate. D251 serves as a coordination point for Zn(2+). D251 is a catalytic residue. H255 and A267 together coordinate substrate.

The protein belongs to the metallo-dependent hydrolases superfamily. DHOase family. Class II DHOase subfamily. Homodimer. Zn(2+) is required as a cofactor. Requires Co(2+) as cofactor. The cofactor is Mg(2+). It depends on Ni(2+) as a cofactor.

It carries out the reaction (S)-dihydroorotate + H2O = N-carbamoyl-L-aspartate + H(+). It participates in pyrimidine metabolism; UMP biosynthesis via de novo pathway; (S)-dihydroorotate from bicarbonate: step 3/3. Its function is as follows. Catalyzes the reversible cyclization of carbamoyl aspartate to dihydroorotate. In Klebsiella pneumoniae subsp. pneumoniae (strain ATCC 700721 / MGH 78578), this protein is Dihydroorotase.